The sequence spans 248 residues: Triosephosphate isomerase (248 aa).

N10 and K12 together coordinate substrate. The active-site Electrophile is H95. The active-site Proton acceptor is the E165.

It belongs to the triosephosphate isomerase family. As to quaternary structure, homodimer.

It carries out the reaction D-glyceraldehyde 3-phosphate = dihydroxyacetone phosphate. Its pathway is carbohydrate biosynthesis; gluconeogenesis. The protein operates within carbohydrate degradation; glycolysis; D-glyceraldehyde 3-phosphate from glycerone phosphate: step 1/1. In Debaryomyces hansenii (strain ATCC 36239 / CBS 767 / BCRC 21394 / JCM 1990 / NBRC 0083 / IGC 2968) (Yeast), this protein is Triosephosphate isomerase (TPI1).